We begin with the raw amino-acid sequence, 475 residues long: Ribulose bisphosphate carboxylase large chain (475 aa).

Asn123 and Thr173 together coordinate substrate. Catalysis depends on Lys175, which acts as the Proton acceptor. Lys177 contributes to the substrate binding site. The Mg(2+) site is built by Lys201, Asp203, and Glu204. Residue Lys201 is modified to N6-carboxylysine. His294 (proton acceptor) is an active-site residue. 3 residues coordinate substrate: Arg295, His327, and Ser379.

Belongs to the RuBisCO large chain family. Type I subfamily. In terms of assembly, heterohexadecamer of 8 large chains and 8 small chains; disulfide-linked. The disulfide link is formed within the large subunit homodimers. It depends on Mg(2+) as a cofactor. Post-translationally, the disulfide bond which can form in the large chain dimeric partners within the hexadecamer appears to be associated with oxidative stress and protein turnover.

The protein resides in the plastid. It localises to the chloroplast. It carries out the reaction 2 (2R)-3-phosphoglycerate + 2 H(+) = D-ribulose 1,5-bisphosphate + CO2 + H2O. It catalyses the reaction D-ribulose 1,5-bisphosphate + O2 = 2-phosphoglycolate + (2R)-3-phosphoglycerate + 2 H(+). Functionally, ruBisCO catalyzes two reactions: the carboxylation of D-ribulose 1,5-bisphosphate, the primary event in carbon dioxide fixation, as well as the oxidative fragmentation of the pentose substrate in the photorespiration process. Both reactions occur simultaneously and in competition at the same active site. The sequence is that of Ribulose bisphosphate carboxylase large chain from Euglena gracilis.